The sequence spans 149 residues: Macrodomain Ter protein (149 aa).

This sequence belongs to the MatP family. As to quaternary structure, homodimer.

It localises to the cytoplasm. In terms of biological role, required for spatial organization of the terminus region of the chromosome (Ter macrodomain) during the cell cycle. Prevents early segregation of duplicated Ter macrodomains during cell division. Binds specifically to matS, which is a 13 bp signature motif repeated within the Ter macrodomain. In Vibrio cholerae serotype O1 (strain ATCC 39315 / El Tor Inaba N16961), this protein is Macrodomain Ter protein.